A 672-amino-acid chain; its full sequence is Acetoacetyl-CoA synthetase (672 aa).

This sequence belongs to the ATP-dependent AMP-binding enzyme family.

It is found in the cytoplasm. The protein localises to the cytosol. It carries out the reaction acetoacetate + ATP + CoA = acetoacetyl-CoA + AMP + diphosphate. Its function is as follows. Activates acetoacetate to acetoacetyl-CoA. The chain is Acetoacetyl-CoA synthetase (aacs) from Xenopus tropicalis (Western clawed frog).